The sequence spans 517 residues: Lysophosphatidylcholine acyltransferase 2B (517 aa).

An N-linked (GlcNAc...) asparagine glycan is attached at N29. A run of 3 helical transmembrane segments spans residues 70 to 90, 103 to 123, and 137 to 157; these read IVFLFLLLWPVALLSTINLPI, LIKPVFIFLLRLAFFCAGFLI, and IFVVAPHSTFFDAIAVIVAGL. The short motif at 143–148 is the HXXXXD motif element; it reads HSTFFD. 2 consecutive EF-hand domains span residues 388-423 and 425-460; these read PISEPLRQLFSLFDRNQDGTIDFREYVIGLTVLCNP and NTEKILQMSFKLFDLDEDGYITEQELTTMLRAAFGV. 10 residues coordinate Ca(2+): D401, N403, D405, T407, E412, D438, D440, D442, Y444, and E449.

Belongs to the 1-acyl-sn-glycerol-3-phosphate acyltransferase family.

It is found in the membrane. Its pathway is lipid metabolism; phospholipid metabolism. In terms of biological role, probable acetyltransferase. This chain is Lysophosphatidylcholine acyltransferase 2B (Lpcat2b), found in Rattus norvegicus (Rat).